The chain runs to 517 residues: Nectin-1 (517 aa).

Positions 1–30 (MARMGLAGAAGRWWGLALGLTAFFLPGVHS) are cleaved as a signal peptide. In terms of domain architecture, Ig-like V-type spans 31–141 (QVVQVNDSMY…GNRESQLNLT (111 aa)). At 31 to 355 (QVVQVNDSMY…GRRAGPVPTA (325 aa)) the chain is on the extracellular side. Asparagine 36, asparagine 72, and asparagine 139 each carry an N-linked (GlcNAc...) asparagine glycan. A disulfide bridge links cysteine 51 with cysteine 124. 2 Ig-like C2-type domains span residues 149–238 (WIEG…FKES) and 247–334 (PEVT…VNIT). Cystine bridges form between cysteine 172-cysteine 226 and cysteine 269-cysteine 316. N-linked (GlcNAc...) (complex) asparagine glycosylation occurs at asparagine 202. Positions 282–299 (WTTLNGSLPKGVEAQNRT) are interaction with FGFR. N-linked (GlcNAc...) asparagine glycosylation is found at asparagine 286, asparagine 297, asparagine 307, and asparagine 332. A helical membrane pass occupies residues 356–376 (IIGGVAGSILLVLIVVGGIVV). Residues 377–517 (ALRRRRHTFK…SFISKKEWYV (141 aa)) lie on the Cytoplasmic side of the membrane. Positions 399–488 (GYSKAGIPQH…DGYGDRTLGY (90 aa)) are disordered. A phosphoserine mark is found at serine 422, serine 434, and serine 435. The residue at position 436 (tyrosine 436) is a Phosphotyrosine. The segment covering 436–445 (YEEEEEEEEG) has biased composition (acidic residues). Residues 449–466 (GERKVGGPHPKYDEDAKR) show a composition bias toward basic and acidic residues. Serine 511 bears the Phosphoserine mark.

Belongs to the nectin family. Cis- and trans-homodimer. Can form trans-heterodimers with NECTIN3 and with NECTIN4. Interaction between NECTIN1 and NECTIN3 on the pre- and postsynaptic sites, respectively, initiates the formation of puncta adherentia junctions between axons and dendrites. Interacts (via cytoplasmic domain) with AFDN (via PDZ domain); this interaction recruits NECTIN1 to cadherin-based adherens junctions and provides a connection with the actin cytoskeleton. Interacts with integrin alphaV/beta3. Interacts (via Ig-like C2-type domain 2) with FGFR1, FGFR2 and FGFR3. In terms of assembly, (Microbial infection) Interacts with herpes simplex virus 1/HHV-1, herpes simplex virus 2/HHV-2, and pseudorabies virus/PRV envelope glycoprotein D. Post-translationally, (Microbial infection) Ubiquitinated by CBL following infection by herpes simplex virus 1/HHV-1 and association with HHV-1 envelope glycoprotein D, leading to its removal from cell surface.

Its subcellular location is the cell membrane. It is found in the cell junction. It localises to the adherens junction. The protein localises to the presynaptic cell membrane. The protein resides in the secreted. In terms of biological role, cell adhesion molecule that promotes cell-cell contacts and plays important roles in the development of the nervous system. Acts by forming homophilic or heterophilic trans-dimers. Heterophilic interactions have been detected between NECTIN1 and NECTIN3 and between NECTIN1 and NECTIN4. Involved in axon guidance by promoting contacts between the commissural axons and the floor plate cells. Involved in synaptogegesis. Has some neurite outgrowth-promoting activity. Promotes formation of checkerboard-like cellular pattern of hair cells and supporting cells in the auditory epithelium via heterophilic interaction with NECTIN3: NECTIN1 is present in the membrane of hair cells and associates with NECTIN3 on supporting cells, thereby mediating heterotypic adhesion between these two cell types. Required for enamel mineralization. Its function is as follows. (Microbial infection) Acts as a receptor for herpes simplex virus 1/HHV-1, herpes simplex virus 2/HHV-2, and pseudorabies virus/PRV. Constitutes the major receptor for herpes simplex virus 1/HHV-1 entry into host cells. The chain is Nectin-1 from Homo sapiens (Human).